The sequence spans 310 residues: Olfactory receptor 10N1 (310 aa).

Residues M1–T23 lie on the Extracellular side of the membrane. The N-linked (GlcNAc...) asparagine glycan is linked to N3. Residues L24–F44 traverse the membrane as a helical segment. The Cytoplasmic portion of the chain corresponds to T45–T55. Residues P56–C76 traverse the membrane as a helical segment. At P77–C95 the chain is on the extracellular side. An intrachain disulfide couples C95 to C187. The chain crosses the membrane as a helical span at residues A96–M116. Topologically, residues A117 to P136 are cytoplasmic. The chain crosses the membrane as a helical span at residues G137 to L157. Topologically, residues T158–G202 are extracellular. The helical transmembrane segment at F203 to I223 threads the bilayer. Over L224–S237 the chain is Cytoplasmic. A helical membrane pass occupies residues T238–L258. Residues Q259–P264 are Extracellular-facing. The chain crosses the membrane as a helical span at residues L265 to I285. The Cytoplasmic segment spans residues Y286–K310.

It belongs to the G-protein coupled receptor 1 family.

The protein localises to the cell membrane. Its function is as follows. Odorant receptor. The polypeptide is Olfactory receptor 10N1 (Mus musculus (Mouse)).